The primary structure comprises 1550 residues: DNA excision repair protein ERCC-6-like 2 (1550 aa).

The interval 1–23 (MDPSAPQPRAETSGKDIWHPGER) is disordered. Residues 12–22 (TSGKDIWHPGE) are compositionally biased toward basic and acidic residues. The Helicase ATP-binding domain occupies 135 to 321 (YGHYIHGGGC…WCVMDWAVPG (187 aa)). 148 to 155 (DDMGLGKT) is an ATP binding site. The DEAH box motif lies at 272 to 275 (DEAH). The Helicase C-terminal domain maps to 512–662 (VLQQLLNHCR…CVVVGSENAK (151 aa)). The Atypical PIP-box signature appears at 785 to 796 (PGQLTLLQCGFS). 3 disordered regions span residues 808 to 848 (DSDG…TSKH), 914 to 1002 (FPDN…SSLR), and 1354 to 1410 (AETK…TRTG). Basic and acidic residues-rich tracts occupy residues 830–840 (EAKDAGCEKNQ) and 933–953 (TEHT…DKRN). Residues serine 980 and serine 983 each carry the phosphoserine modification. Over residues 992–1002 (SRVRKRASSLR) the composition is skewed to basic residues. Residues 1359-1388 (SPVSSTQEIDSGKNSQASEDTVTSRSLNSE) show a composition bias toward polar residues. Phosphoserine is present on residues serine 1373 and serine 1376. Residues 1389–1405 (SETRERRLENTMKDQQD) are compositionally biased toward basic and acidic residues.

This sequence belongs to the SNF2/RAD54 helicase family. As to quaternary structure, interacts with NEK6. Interacts (via an atypical PIP-box) with PCNA; this interaction facilitates cenrtomeric localization of ERCC6L2. Interacts with CYREN; this interaction is DNA independent. Interacts with XRCC6 and XRCC5. In terms of processing, phosphorylated by NEK6. In terms of tissue distribution, expressed in bone marrow (at protein level).

It is found in the nucleus. The protein localises to the cytoplasm. It localises to the cytoskeleton. Its subcellular location is the microtubule organizing center. The protein resides in the centrosome. It is found in the mitochondrion. The protein localises to the chromosome. It localises to the centromere. Functionally, promotes double-strand break (DSB) end-joining and facilitates programmed recombination by controlling how DNA ends are joined in a spatially oriented manner during repair. Also plays a role in DNA repair by restricting DNA end resection in double strand break (DSB) repair. Facilitates replication of complex DNA regions and regulates the maintenance of chromatin structure. This is DNA excision repair protein ERCC-6-like 2 from Homo sapiens (Human).